We begin with the raw amino-acid sequence, 103 residues long: Ig kappa-b4 chain C region (103 aa).

Residues 5–95 (PTVLIFPPAA…KVTQGTTSVV (91 aa)) enclose the Ig-like domain. Cys26 and Cys85 form a disulfide bridge.

The polypeptide is Ig kappa-b4 chain C region (Oryctolagus cuniculus (Rabbit)).